Consider the following 954-residue polypeptide: MGVSRPPSTPASKIERTPMSTPTPGGSTRVKEEKIFVTVRVRPLSKKELALKDQVAWECDDNQTILYKGPPQDRAAPTSYTFDKVFGPASQTEVVYEEGAKDVAMSALTGINATIFAYGQTSSGKTFTMRGVTESAVNDIYRHIENTPERDFIIKISAMEIYNEIVKDLLRPESTNLRLLDDPEKGTIVEKLEEEIAKDSQHLRHLISICEEQRQVGETALNDTSSRSHQIIRLTVESRLREVSGCVKSFVANLNFVDLAGSERAAQTHAVGARLKEGCHINRSLLTLTTVIRKLSSDKRSGHIPYRDSKLTRILQLSLGGNARTAIICTMSPAQTHVEQSRNTLFFATCAKEVTNNAKVNMVVSDKQLVKHLQMEVARLEAELRTPDRASSSEIIIMERDRKIRQMEKEMEELKKQRDNAQLKLEELQKKMGDNQPGWNPFDSPQRTRKCLTYSGSLQPSNKMKIRSSIRQSATAPFMLKHEIRKLEQLQQQLEVEANRAIEVLHKEVECHKHGNQDAAETIAKLQAEIRGMQSVRSDRDVDMITDEGNGSDLKEEISRLHMQDNDIAKLEAKLENVQRSIDRLVMSLPNVGTQCNETTPKSNRAKKKKRMLLPLGVSNINRPNLIRAPCSPLSSSRPLEPEVENRAPEGDTVSHEGSERATPTKSEDTGDVSSRDETPRYRRSSSVNMKKMQKMFQNAAEENVRNIRAYVTELKERVAKLQYQKQLLVCQVLELESNEGKTNDMEEDSEENAGSLQDGPDSWDRLFKEQMQHIIQLWDLCHVSIIHRTQFYLLFRGDRADQIYIEVEVRRLTWLQQHFAEVGDASPAAGDDSTISLASSIKALRNEREFLARRMGSRLTEEERERLFIKWQVPLEAKQRKLQLVNRLWTDPNDQAHIDESADIVARLVGFCEGGNISKEMFELNFAVPASRKPWLMGWQPISNMIREKTQLW.

The interval 1–29 (MGVSRPPSTPASKIERTPMSTPTPGGSTR) is disordered. The span at 17–28 (TPMSTPTPGGST) shows a compositional bias: low complexity. One can recognise a Kinesin motor domain in the interval 34–354 (KIFVTVRVRP…LFFATCAKEV (321 aa)). 119-126 (GQTSSGKT) serves as a coordination point for ATP. 2 coiled-coil regions span residues 363–436 (VVSD…GDNQ) and 480–588 (LKHE…LVMS). 2 disordered regions span residues 624–689 (PNLI…SSVN) and 741–762 (GKTN…DGPD). Positions 630 to 639 (PCSPLSSSRP) are enriched in low complexity. Basic and acidic residues-rich tracts occupy residues 640–660 (LEPE…EGSE) and 666–681 (KSED…ETPR).

The protein belongs to the TRAFAC class myosin-kinesin ATPase superfamily. Kinesin family. KIN-7 subfamily. As to expression, ubiquitous with a preferential expression in the shoot apical meristem (SAM).

Functionally, may be essential to promote the progression of cytokinesis during node-internode differentiation. The polypeptide is Kinesin-like protein KIN-7A (Oryza sativa subsp. japonica (Rice)).